Here is a 626-residue protein sequence, read N- to C-terminus: Chaperone protein HtpG (626 aa).

An a; substrate-binding region spans residues Met1–Arg331. A b region spans residues Glu332–Arg544. A c region spans residues Leu545 to Ala626.

The protein belongs to the heat shock protein 90 family. Homodimer.

It is found in the cytoplasm. Its function is as follows. Molecular chaperone. Has ATPase activity. The protein is Chaperone protein HtpG of Methylorubrum populi (strain ATCC BAA-705 / NCIMB 13946 / BJ001) (Methylobacterium populi).